Reading from the N-terminus, the 604-residue chain is Prostaglandin G/H synthase 2 (604 aa).

The signal sequence occupies residues 1 to 17; it reads MLARAGLLCASLSPPHA. The EGF-like domain occupies 18–55; the sequence is ANPCCSNPCQNQGVCMSIGFDQYMCDCSRTGFYGENCS. 4 disulfide bridges follow: Cys21–Cys32, Cys22–Cys145, Cys26–Cys42, and Cys44–Cys54. Asn53 carries N-linked (GlcNAc...) asparagine glycosylation. Arg106 lines the substrate pocket. A glycan (N-linked (GlcNAc...) asparagine) is linked at Asn130. Residue His193 is the Proton acceptor of the active site. Tyr341 is a substrate binding site. Residue Tyr371 is the For cyclooxygenase activity of the active site. His374 contributes to the heme b binding site. Asn396 is a glycosylation site (N-linked (GlcNAc...) asparagine). Residue Cys526 is modified to S-nitrosocysteine. Cys555 and Cys561 are oxidised to a cystine. The N-linked (GlcNAc...) asparagine glycan is linked to Asn580.

This sequence belongs to the prostaglandin G/H synthase family. In terms of assembly, homodimer. The cofactor is heme b. S-nitrosylation by NOS2 (iNOS) activates enzyme activity. S-nitrosylation may take place on different Cys residues in addition to Cys-526.

The protein resides in the microsome membrane. Its subcellular location is the endoplasmic reticulum membrane. It is found in the nucleus inner membrane. The protein localises to the nucleus outer membrane. The enzyme catalyses (5Z,8Z,11Z,14Z)-eicosatetraenoate + AH2 + 2 O2 = prostaglandin H2 + A + H2O. It catalyses the reaction (5Z,8Z,11Z,14Z)-eicosatetraenoate + 2 O2 = prostaglandin G2. The catalysed reaction is prostaglandin G2 + AH2 = prostaglandin H2 + A + H2O. It carries out the reaction (5Z,8Z,11Z,14Z,17Z)-eicosapentaenoate + 2 O2 = prostaglandin G3. The enzyme catalyses prostaglandin G3 + AH2 = prostaglandin H3 + A + H2O. It catalyses the reaction (8Z,11Z,14Z)-eicosatrienoate + 2 O2 = prostaglandin G1. The catalysed reaction is prostaglandin G1 + AH2 = prostaglandin H1 + A + H2O. It carries out the reaction 2-(5Z,8Z,11Z,14Z)-eicosatetraenoyl-sn-glycero-3-phosphoethanolamine + 2 O2 = 2-(prostaglandin G2)-sn-glycero-3-phosphoethanolamine. The enzyme catalyses 2-(prostaglandin G2)-sn-glycero-3-phosphoethanolamine + AH2 = 2-(prostaglandin H2)-sn-glycero-3-phosphoethanolamine + A + H2O. It catalyses the reaction 2-(5Z,8Z,11Z,14Z)-eicosatetraenoyl-sn-glycero-3-phosphocholine + 2 O2 = 2-(prostaglandin G2)-sn-glycero-3-phosphocholine. The catalysed reaction is 2-(prostaglandin G2)-sn-glycero-3-phosphocholine + AH2 = 2-(prostaglandin H2)-sn-glycero-3-phosphocholine + A + H2O. It carries out the reaction (15S)-hydroperoxy-(5Z,8Z,11Z,13E)-eicosatetraenoate + AH2 = (15S)-hydroxy-(5Z,8Z,11Z,13E)-eicosatetraenoate + A + H2O. The enzyme catalyses 2-(5Z,8Z,11Z,14Z)-eicosatetraenoyl-sn-glycero-3-phosphocholine + AH2 + O2 = 2-[(15S)-hydroxy-(5Z,8Z,11Z,13E)-eicosatetraenoyl]-sn-glycero-3-phosphocholine + A + H2O. It catalyses the reaction 2-(5Z,8Z,11Z,14Z)-eicosatetraenoyl-sn-glycero-3-phosphocholine + AH2 + O2 = 2-[(15R)-hydroxy-(5Z,8Z,11Z,13E)-eicosatetraenoyl]-sn-glycero-3-phosphocholine + A + H2O. The catalysed reaction is 2-(5Z,8Z,11Z,14Z)-eicosatetraenoyl-sn-glycero-3-phosphocholine + AH2 + O2 = 2-[(11R)-hydroxy-(5Z,8Z,12E,14Z)-eicosatetraenoyl]-sn-glycero-3-phosphocholine + A + H2O. It carries out the reaction (9Z,12Z)-octadecadienoate + AH2 + O2 = 9-hydroxy-(10E,12Z)-octadecadienoate + A + H2O. The enzyme catalyses (9Z,12Z)-octadecadienoate + AH2 + O2 = 13-hydroxy-(9Z,11E)-octadecadienoate + A + H2O. It catalyses the reaction (5Z,8Z,11Z,14Z)-eicosatetraenoate + AH2 + O2 = (15R)-hydroxy-(5Z,8Z,11Z,13E)-eicosatetraenoate + A + H2O. The catalysed reaction is (5Z,8Z,11Z,14Z)-eicosatetraenoate + AH2 + O2 = (11R)-hydroxy-(5Z,8Z,12E,14Z)-eicosatetraenoate + A + H2O. It carries out the reaction (5Z,8Z,11Z,14Z,17Z)-eicosapentaenoate + AH2 + O2 = (11R)-hydroxy-(5Z,8Z,12E,14Z,17Z)-eicosapentaenoate + A + H2O. The enzyme catalyses (5Z,8Z,11Z,14Z,17Z)-eicosapentaenoate + AH2 + O2 = (18S)-hydroxy-(5Z,8Z,11Z,14Z,16E)-eicosapentaenoate + A + H2O. It catalyses the reaction (5Z,8Z,11Z,14Z,17Z)-eicosapentaenoate + AH2 + O2 = (18R)-hydroxy-(5Z,8Z,11Z,14Z,16E)-eicosapentaenoate + A + H2O. The catalysed reaction is (5Z,8Z,11Z,14Z,17Z)-eicosapentaenoate + AH2 + O2 = (15R)-hydroxy-(5Z,8Z,11Z,13E,17Z)-eicosapentaenoate + A + H2O. It carries out the reaction (5Z,8Z,11Z,14Z,17Z)-eicosapentaenoate + AH2 + O2 = (15S)-hydroxy-(5Z,8Z,11Z,13E,17Z)-eicosapentaenoate + A + H2O. The enzyme catalyses (7Z,10Z,13Z,16Z,19Z)-docosapentaenoate + AH2 + O2 = 13R-hydroxy-(7Z,10Z,14E,16Z,19Z)-docosapentaenoate + A + H2O. It catalyses the reaction (4Z,7Z,10Z,13Z,16Z,19Z)-docosahexaenoate + AH2 + O2 = 13-hydroxy-(4Z,7Z,10Z,14E,16Z,19Z)-docosahexaenoate + A + H2O. The catalysed reaction is (5S)-hydroxy-(6E,8Z,11Z,14Z)-eicosatetraenoate + AH2 + O2 = (5S,15R)-dihydroxy-(6E,8Z,11Z,13E)-eicosatetraenoate + A + H2O. It carries out the reaction (4Z,7Z,10Z,13Z,16Z,19Z)-docosahexaenoate + AH2 + O2 = 17R-hydroxy-(4Z,7Z,10Z,13Z,15E,19Z)-docosahexaenoate + A + H2O. The enzyme catalyses (5S)-hydroxy-(6E,8Z,11Z,14Z)-eicosatetraenoate + AH2 + O2 = (5S,15S)-dihydroxy-(6E,8Z,11Z,13E)-eicosatetraenoate + A + H2O. It catalyses the reaction (5S)-hydroxy-(6E,8Z,11Z,14Z)-eicosatetraenoate + AH2 + O2 = (5S,11R)-dihydroxy-(6E,8Z,12E,14Z)-eicosatetraenoate + A + H2O. The catalysed reaction is 2-(5Z,8Z,11Z,14Z-eicosatetraenoyl)-glycerol + 2 O2 = 2-glyceryl-prostaglandin G2. It carries out the reaction 2-glyceryl-prostaglandin G2 + AH2 = 2-glyceryl-prostaglandin H2 + A + H2O. The enzyme catalyses (5Z,8Z,11Z,14Z)-eicosatetraenoate + O2 = (15R)-hydroperoxy-(5Z,8Z,11Z,13E)-eicosatetraenoate. It catalyses the reaction (5Z,8Z,11Z,14Z)-eicosatetraenoate + O2 = 11R-hydroperoxy-(5Z,8Z,12E,14Z)-eicosatetraenoate. The catalysed reaction is (9Z,12Z)-octadecadienoate + AH2 + O2 = (9R)-hydroxy-(10E,12Z)-octadecadienoate + A + H2O. It carries out the reaction (9Z,12Z)-octadecadienoate + AH2 + O2 = (9S)-hydroxy-(10E,12Z)-octadecadienoate + A + H2O. The enzyme catalyses (9Z,12Z)-octadecadienoate + AH2 + O2 = (13S)-hydroxy-(9Z,11E)-octadecadienoate + A + H2O. It catalyses the reaction (9Z,12Z)-octadecadienoate + AH2 + O2 = (13R)-hydroxy-(9Z,11E)-octadecadienoate + A + H2O. The protein operates within lipid metabolism; prostaglandin biosynthesis. In terms of biological role, dual cyclooxygenase and peroxidase in the biosynthesis pathway of prostanoids, a class of C20 oxylipins mainly derived from arachidonate ((5Z,8Z,11Z,14Z)-eicosatetraenoate, AA, C20:4(n-6)), with a particular role in the inflammatory response. The cyclooxygenase activity oxygenates AA to the hydroperoxy endoperoxide prostaglandin G2 (PGG2), and the peroxidase activity reduces PGG2 to the hydroxy endoperoxide prostaglandin H2 (PGH2), the precursor of all 2-series prostaglandins and thromboxanes. This complex transformation is initiated by abstraction of hydrogen at carbon 13 (with S-stereochemistry), followed by insertion of molecular O2 to form the endoperoxide bridge between carbon 9 and 11 that defines prostaglandins. The insertion of a second molecule of O2 (bis-oxygenase activity) yields a hydroperoxy group in PGG2 that is then reduced to PGH2 by two electrons. Similarly catalyzes successive cyclooxygenation and peroxidation of dihomo-gamma-linoleate (DGLA, C20:3(n-6)) and eicosapentaenoate (EPA, C20:5(n-3)) to corresponding PGH1 and PGH3, the precursors of 1- and 3-series prostaglandins. In an alternative pathway of prostanoid biosynthesis, converts 2-arachidonoyl lysophopholipids to prostanoid lysophopholipids, which are then hydrolyzed by intracellular phospholipases to release free prostanoids. Metabolizes 2-arachidonoyl glycerol yielding the glyceryl ester of PGH2, a process that can contribute to pain response. Generates lipid mediators from n-3 and n-6 polyunsaturated fatty acids (PUFAs) via a lipoxygenase-type mechanism. Oxygenates PUFAs to hydroperoxy compounds and then reduces them to corresponding alcohols. Plays a role in the generation of resolution phase interaction products (resolvins) during both sterile and infectious inflammation. Metabolizes docosahexaenoate (DHA, C22:6(n-3)) to 17R-HDHA, a precursor of the D-series resolvins (RvDs). As a component of the biosynthetic pathway of E-series resolvins (RvEs), converts eicosapentaenoate (EPA, C20:5(n-3)) primarily to 18S-HEPE that is further metabolized by ALOX5 and LTA4H to generate 18S-RvE1 and 18S-RvE2. In vascular endothelial cells, converts docosapentaenoate (DPA, C22:5(n-3)) to 13R-HDPA, a precursor for 13-series resolvins (RvTs) shown to activate macrophage phagocytosis during bacterial infection. In activated leukocytes, contributes to oxygenation of hydroxyeicosatetraenoates (HETE) to diHETES (5,15-diHETE and 5,11-diHETE). Can also use linoleate (LA, (9Z,12Z)-octadecadienoate, C18:2(n-6)) as substrate and produce hydroxyoctadecadienoates (HODEs) in a regio- and stereospecific manner, being (9R)-HODE ((9R)-hydroxy-(10E,12Z)-octadecadienoate) and (13S)-HODE ((13S)-hydroxy-(9Z,11E)-octadecadienoate) its major products. During neuroinflammation, plays a role in neuronal secretion of specialized preresolving mediators (SPMs) 15R-lipoxin A4 that regulates phagocytic microglia. This is Prostaglandin G/H synthase 2 (PTGS2) from Neovison vison (American mink).